The chain runs to 205 residues: CASP-like protein 2A1 (205 aa).

The tract at residues 1 to 25 (MDKSKVSTAVGGETPVGLITGSRDD) is disordered. Residues 1-34 (MDKSKVSTAVGGETPVGLITGSRDDELESGSMRT) lie on the Cytoplasmic side of the membrane. The helical transmembrane segment at 35–55 (AETVLRLVPMAFCISALVLML) threads the bilayer. At 56 to 76 (KNSQTNDFGTLSYSDLGAFRY) the chain is on the extracellular side. The chain crosses the membrane as a helical span at residues 77 to 97 (LVHANGICAGYSLLSAIIVAM). The Cytoplasmic portion of the chain corresponds to 98 to 105 (PRPSTMSR). The helical transmembrane segment at 106–126 (AWTFFFLDQVLTYVILAAAAV) threads the bilayer. Residues 127–156 (SVEALYLARKGDIAITWSAACVSFGGFCHK) are Extracellular-facing. The helical transmembrane segment at 157 to 177 (AITSAVITFIVVVCYALLSLV) threads the bilayer. Topologically, residues 178–205 (SSYKLFSRYGAPDVSYPGKGIEVAAFHS) are cytoplasmic.

It belongs to the Casparian strip membrane proteins (CASP) family. In terms of assembly, homodimer and heterodimers.

Its subcellular location is the cell membrane. This is CASP-like protein 2A1 from Ricinus communis (Castor bean).